The primary structure comprises 390 residues: S-adenosylmethionine synthase (390 aa).

Histidine 15 provides a ligand contact to ATP. Aspartate 17 is a Mg(2+) binding site. A K(+)-binding site is contributed by glutamate 43. L-methionine contacts are provided by glutamate 56 and glutamine 99. Residues glutamine 99–arginine 109 form a flexible loop region. Residues aspartate 164 to lysine 166, arginine 230 to phenylalanine 231, aspartate 239, arginine 245 to lysine 246, alanine 262, and lysine 266 each bind ATP. Aspartate 239 provides a ligand contact to L-methionine. Lysine 270 is an L-methionine binding site.

Belongs to the AdoMet synthase family. Homotetramer; dimer of dimers. Requires Mg(2+) as cofactor. K(+) is required as a cofactor.

It localises to the cytoplasm. It catalyses the reaction L-methionine + ATP + H2O = S-adenosyl-L-methionine + phosphate + diphosphate. It functions in the pathway amino-acid biosynthesis; S-adenosyl-L-methionine biosynthesis; S-adenosyl-L-methionine from L-methionine: step 1/1. Catalyzes the formation of S-adenosylmethionine (AdoMet) from methionine and ATP. The overall synthetic reaction is composed of two sequential steps, AdoMet formation and the subsequent tripolyphosphate hydrolysis which occurs prior to release of AdoMet from the enzyme. The polypeptide is S-adenosylmethionine synthase (Photorhabdus laumondii subsp. laumondii (strain DSM 15139 / CIP 105565 / TT01) (Photorhabdus luminescens subsp. laumondii)).